Here is a 397-residue protein sequence, read N- to C-terminus: CCA-adding enzyme (397 aa).

ATP-binding residues include glycine 26 and arginine 29. CTP-binding residues include glycine 26 and arginine 29. 2 residues coordinate Mg(2+): aspartate 39 and aspartate 41. Positions 110, 153, 156, 159, and 162 each coordinate ATP. Positions 110, 153, 156, 159, and 162 each coordinate CTP.

Belongs to the tRNA nucleotidyltransferase/poly(A) polymerase family. Bacterial CCA-adding enzyme type 3 subfamily. In terms of assembly, homodimer. The cofactor is Mg(2+).

It carries out the reaction a tRNA precursor + 2 CTP + ATP = a tRNA with a 3' CCA end + 3 diphosphate. It catalyses the reaction a tRNA with a 3' CCA end + 2 CTP + ATP = a tRNA with a 3' CCACCA end + 3 diphosphate. In terms of biological role, catalyzes the addition and repair of the essential 3'-terminal CCA sequence in tRNAs without using a nucleic acid template. Adds these three nucleotides in the order of C, C, and A to the tRNA nucleotide-73, using CTP and ATP as substrates and producing inorganic pyrophosphate. tRNA 3'-terminal CCA addition is required both for tRNA processing and repair. Also involved in tRNA surveillance by mediating tandem CCA addition to generate a CCACCA at the 3' terminus of unstable tRNAs. While stable tRNAs receive only 3'-terminal CCA, unstable tRNAs are marked with CCACCA and rapidly degraded. This is CCA-adding enzyme from Bacillus mycoides (strain KBAB4) (Bacillus weihenstephanensis).